Reading from the N-terminus, the 66-residue chain is Large ribosomal subunit protein bL33c (66 aa).

Belongs to the bacterial ribosomal protein bL33 family.

Its subcellular location is the plastid. The protein localises to the chloroplast. The sequence is that of Large ribosomal subunit protein bL33c from Barbarea verna (Land cress).